Reading from the N-terminus, the 236-residue chain is MADDWESAADSEVVIRPTAAASVNKWEGEDEDEDIKDSWEDEEEKKDEEKPTKTEAPAKPKPNKALKAKLEQQALLEEEAEAKRLANLSPAEKLAEKLRLQKIQEASDLKHAQEAFGVTSTCGGLDAFNPETKEEFKEFGATLSWKVGQFRESEHFPQFVEDLVRSLCVNLSAADIKKVKMNVEILHSEKLKLEKANAKKPAGKGKGKVTLRTENDDIDGYQKYGNDFTEDYDDFM.

The interval 1-65 (MADDWESAAD…APAKPKPNKA (65 aa)) is disordered. Acidic residues predominate over residues 28–46 (GEDEDEDIKDSWEDEEEKK). Positions 47 to 58 (DEEKPTKTEAPA) are enriched in basic and acidic residues.

This sequence belongs to the eIF-3 subunit J family. Component of the eukaryotic translation initiation factor 3 (eIF-3) complex. The eIF-3 complex interacts with pix.

The protein resides in the cytoplasm. In terms of biological role, component of the eukaryotic translation initiation factor 3 (eIF-3) complex, which is involved in protein synthesis of a specialized repertoire of mRNAs and, together with other initiation factors, stimulates binding of mRNA and methionyl-tRNAi to the 40S ribosome. The eIF-3 complex specifically targets and initiates translation of a subset of mRNAs involved in cell proliferation. This chain is Eukaryotic translation initiation factor 3 subunit J, found in Drosophila melanogaster (Fruit fly).